The primary structure comprises 60 residues: Large ribosomal subunit protein bL32 (60 aa).

This sequence belongs to the bacterial ribosomal protein bL32 family.

In Streptococcus suis (strain 05ZYH33), this protein is Large ribosomal subunit protein bL32.